A 1357-amino-acid polypeptide reads, in one-letter code: DNA-directed RNA polymerase subunit beta (1357 aa).

Belongs to the RNA polymerase beta chain family. The RNAP catalytic core consists of 2 alpha, 1 beta, 1 beta' and 1 omega subunit. When a sigma factor is associated with the core the holoenzyme is formed, which can initiate transcription.

It catalyses the reaction RNA(n) + a ribonucleoside 5'-triphosphate = RNA(n+1) + diphosphate. Its function is as follows. DNA-dependent RNA polymerase catalyzes the transcription of DNA into RNA using the four ribonucleoside triphosphates as substrates. This is DNA-directed RNA polymerase subunit beta from Nitrosomonas europaea (strain ATCC 19718 / CIP 103999 / KCTC 2705 / NBRC 14298).